Here is a 310-residue protein sequence, read N- to C-terminus: Proline iminopeptidase (310 aa).

The AB hydrolase-1 domain occupies 41–288 (LVTLHGGPGG…NSSHMAMWEE (248 aa)). The active-site Nucleophile is Ser116. Asp255 is an active-site residue. His282 acts as the Proton donor in catalysis.

It belongs to the peptidase S33 family. In terms of assembly, part of the tricorn proteolytic complex.

The enzyme catalyses Release of N-terminal proline from a peptide.. Its function is as follows. Cleaves H-Pro-AMC as well as a wide spectrum of amino acid substrates and several peptide substrates without a proline at the N-terminus. In conjunction with the three factors F1, F2 and F3, Tricorn degrades oligopeptides in a sequential manner, yielding free amino acids. The protein is Proline iminopeptidase (pip) of Saccharolobus solfataricus (strain ATCC 35092 / DSM 1617 / JCM 11322 / P2) (Sulfolobus solfataricus).